Here is a 449-residue protein sequence, read N- to C-terminus: Tubulin alpha chain (449 aa).

Gln11 is a GTP binding site. Residue Lys40 is modified to N6-acetyllysine. Positions 71, 140, 144, 145, 179, 206, and 228 each coordinate GTP. Glu71 contacts Mg(2+). Glu254 is an active-site residue.

Belongs to the tubulin family. In terms of assembly, dimer of alpha and beta chains. A typical microtubule is a hollow water-filled tube with an outer diameter of 25 nm and an inner diameter of 15 nM. Alpha-beta heterodimers associate head-to-tail to form protofilaments running lengthwise along the microtubule wall with the beta-tubulin subunit facing the microtubule plus end conferring a structural polarity. Microtubules usually have 13 protofilaments but different protofilament numbers can be found in some organisms and specialized cells. Requires Mg(2+) as cofactor. Undergoes a tyrosination/detyrosination cycle, the cyclic removal and re-addition of a C-terminal tyrosine residue by the enzymes tubulin tyrosine carboxypeptidase (TTCP) and tubulin tyrosine ligase (TTL), respectively. Post-translationally, acetylation of alpha chains at Lys-40 stabilizes microtubules and affects affinity and processivity of microtubule motors. This modification has a role in multiple cellular functions, ranging from cell motility, cell cycle progression or cell differentiation to intracellular trafficking and signaling.

Its subcellular location is the cytoplasm. The protein resides in the cytoskeleton. It catalyses the reaction GTP + H2O = GDP + phosphate + H(+). Its function is as follows. Tubulin is the major constituent of microtubules, a cylinder consisting of laterally associated linear protofilaments composed of alpha- and beta-tubulin heterodimers. Microtubules grow by the addition of GTP-tubulin dimers to the microtubule end, where a stabilizing cap forms. Below the cap, tubulin dimers are in GDP-bound state, owing to GTPase activity of alpha-tubulin. This Tetrahymena pyriformis protein is Tubulin alpha chain.